The following is a 183-amino-acid chain: Adenine phosphoribosyltransferase (183 aa).

The protein belongs to the purine/pyrimidine phosphoribosyltransferase family. In terms of assembly, homodimer.

The protein resides in the cytoplasm. The enzyme catalyses AMP + diphosphate = 5-phospho-alpha-D-ribose 1-diphosphate + adenine. Its pathway is purine metabolism; AMP biosynthesis via salvage pathway; AMP from adenine: step 1/1. Functionally, catalyzes a salvage reaction resulting in the formation of AMP, that is energically less costly than de novo synthesis. The chain is Adenine phosphoribosyltransferase from Shewanella sp. (strain ANA-3).